Consider the following 288-residue polypeptide: Allergen Asp f 7 homolog (288 aa).

Positions 1-20 are cleaved as a signal peptide; that stretch reads MAPQFLKALTVATALGATLA. Low complexity-rich tracts occupy residues 48 to 107 and 117 to 129; these read TVHG…SSSV and TTST…TTST. Residues 48–161 form a disordered region; sequence TVHGTPGPDY…PPVVSIPPIG (114 aa). Residues 130–151 are compositionally biased toward pro residues; the sequence is TPPPPPPAMTTPPPPPPPPATK. N-linked (GlcNAc...) asparagine glycosylation occurs at Asn-268.

It is found in the secreted. This is Allergen Asp f 7 homolog from Arthroderma benhamiae (strain ATCC MYA-4681 / CBS 112371) (Trichophyton mentagrophytes).